We begin with the raw amino-acid sequence, 122 residues long: Large ribosomal subunit protein uL14 (122 aa).

This sequence belongs to the universal ribosomal protein uL14 family. In terms of assembly, part of the 50S ribosomal subunit. Forms a cluster with proteins L3 and L19. In the 70S ribosome, L14 and L19 interact and together make contacts with the 16S rRNA in bridges B5 and B8.

Binds to 23S rRNA. Forms part of two intersubunit bridges in the 70S ribosome. This Gluconobacter oxydans (strain 621H) (Gluconobacter suboxydans) protein is Large ribosomal subunit protein uL14.